A 357-amino-acid polypeptide reads, in one-letter code: 4-hydroxy-3-methylbut-2-en-1-yl diphosphate synthase (flavodoxin) (357 aa).

[4Fe-4S] cluster is bound by residues Cys264, Cys267, Cys299, and Glu306.

It belongs to the IspG family. The cofactor is [4Fe-4S] cluster.

It catalyses the reaction (2E)-4-hydroxy-3-methylbut-2-enyl diphosphate + oxidized [flavodoxin] + H2O + 2 H(+) = 2-C-methyl-D-erythritol 2,4-cyclic diphosphate + reduced [flavodoxin]. The protein operates within isoprenoid biosynthesis; isopentenyl diphosphate biosynthesis via DXP pathway; isopentenyl diphosphate from 1-deoxy-D-xylulose 5-phosphate: step 5/6. Functionally, converts 2C-methyl-D-erythritol 2,4-cyclodiphosphate (ME-2,4cPP) into 1-hydroxy-2-methyl-2-(E)-butenyl 4-diphosphate. The sequence is that of 4-hydroxy-3-methylbut-2-en-1-yl diphosphate synthase (flavodoxin) from Campylobacter jejuni subsp. jejuni serotype O:23/36 (strain 81-176).